The following is a 228-amino-acid chain: UPF0173 metal-dependent hydrolase Tpen_1493 (228 aa).

The protein belongs to the UPF0173 family.

This is UPF0173 metal-dependent hydrolase Tpen_1493 from Thermofilum pendens (strain DSM 2475 / Hrk 5).